Here is a 189-residue protein sequence, read N- to C-terminus: Probable nicotinate-nucleotide adenylyltransferase (189 aa).

The protein belongs to the NadD family.

The enzyme catalyses nicotinate beta-D-ribonucleotide + ATP + H(+) = deamido-NAD(+) + diphosphate. Its pathway is cofactor biosynthesis; NAD(+) biosynthesis; deamido-NAD(+) from nicotinate D-ribonucleotide: step 1/1. Catalyzes the reversible adenylation of nicotinate mononucleotide (NaMN) to nicotinic acid adenine dinucleotide (NaAD). The polypeptide is Probable nicotinate-nucleotide adenylyltransferase (Caulobacter sp. (strain K31)).